The following is a 220-amino-acid chain: MOB kinase activator-like 3 (220 aa).

4 residues coordinate Zn(2+): cysteine 83, cysteine 88, histidine 165, and histidine 170.

It belongs to the MOB1/phocein family.

This chain is MOB kinase activator-like 3 (Mob3), found in Drosophila melanogaster (Fruit fly).